We begin with the raw amino-acid sequence, 272 residues long: Shikimate dehydrogenase (NADP(+)) (272 aa).

Shikimate-binding positions include 14–16 (SKS) and T61. K65 (proton acceptor) is an active-site residue. Residue E77 coordinates NADP(+). Shikimate contacts are provided by N86 and D102. NADP(+)-binding positions include 126-130 (GAGGA), 149-154 (NRTQEK), and M213. Y215 provides a ligand contact to shikimate. G237 provides a ligand contact to NADP(+).

The protein belongs to the shikimate dehydrogenase family. As to quaternary structure, homodimer.

The catalysed reaction is shikimate + NADP(+) = 3-dehydroshikimate + NADPH + H(+). Its pathway is metabolic intermediate biosynthesis; chorismate biosynthesis; chorismate from D-erythrose 4-phosphate and phosphoenolpyruvate: step 4/7. Its function is as follows. Involved in the biosynthesis of the chorismate, which leads to the biosynthesis of aromatic amino acids. Catalyzes the reversible NADPH linked reduction of 3-dehydroshikimate (DHSA) to yield shikimate (SA). In Erwinia tasmaniensis (strain DSM 17950 / CFBP 7177 / CIP 109463 / NCPPB 4357 / Et1/99), this protein is Shikimate dehydrogenase (NADP(+)).